The primary structure comprises 112 residues: MTALTQMKCEACQADAPKVTDAELAELIRMVPDWGVQVRDGIMQLERVYKFKNFKLAMAFTNKLADLAEEEFHHPGILTEWGKVTVTWWSHSIKGLHKNDFIMAAKTDQLLD.

The protein belongs to the pterin-4-alpha-carbinolamine dehydratase family.

The enzyme catalyses (4aS,6R)-4a-hydroxy-L-erythro-5,6,7,8-tetrahydrobiopterin = (6R)-L-erythro-6,7-dihydrobiopterin + H2O. This Shewanella sp. (strain ANA-3) protein is Putative pterin-4-alpha-carbinolamine dehydratase.